A 571-amino-acid chain; its full sequence is Protein dead ringer homolog (571 aa).

2 disordered regions span residues 45 to 117 and 190 to 229; these read QHQQ…EPDK and KRMQ…SCNG. Residues 49–77 are compositionally biased toward basic and acidic residues; that stretch reads RMMEQHKNDDVISNDVRCDDFSDGGERQR. Residues 195–206 show a composition bias toward polar residues; sequence DHNIQQSTNHIP. Positions 207–224 are enriched in low complexity; sequence TPSSASSHTSSGSVTSQT. Residues 249–341 enclose the ARID domain; it reads DIKRKEFLDD…YLYPFECERE (93 aa). Residues 459 to 471 show a composition bias toward low complexity; sequence AAHHAAQQAAQHQ. The interval 459–528 is disordered; it reads AAHHAAQQAA…GDRGRHNEMS (70 aa). Residues 473-558 form the REKLES domain; that stretch reads SLKKEIDSDY…GVLFAHSPNH (86 aa). 2 stretches are compositionally biased toward basic and acidic residues: residues 487-507 and 518-527; these read PPEK…DNQR and MGDRGRHNEM.

It is found in the nucleus. Its function is as follows. Transcription factor. This Ciona intestinalis (Transparent sea squirt) protein is Protein dead ringer homolog (Ci-DRIL1/2).